A 308-amino-acid chain; its full sequence is tRNA dimethylallyltransferase (308 aa).

10–17 (GPTGVGKT) lines the ATP pocket. 12 to 17 (TGVGKT) is a substrate binding site. Residues 35-38 (DSRQ) form an interaction with substrate tRNA region.

It belongs to the IPP transferase family. Monomer. Mg(2+) is required as a cofactor.

It carries out the reaction adenosine(37) in tRNA + dimethylallyl diphosphate = N(6)-dimethylallyladenosine(37) in tRNA + diphosphate. Functionally, catalyzes the transfer of a dimethylallyl group onto the adenine at position 37 in tRNAs that read codons beginning with uridine, leading to the formation of N6-(dimethylallyl)adenosine (i(6)A). The sequence is that of tRNA dimethylallyltransferase from Fervidobacterium nodosum (strain ATCC 35602 / DSM 5306 / Rt17-B1).